A 290-amino-acid chain; its full sequence is ATP synthase gamma chain (290 aa).

This sequence belongs to the ATPase gamma chain family. F-type ATPases have 2 components, CF(1) - the catalytic core - and CF(0) - the membrane proton channel. CF(1) has five subunits: alpha(3), beta(3), gamma(1), delta(1), epsilon(1). CF(0) has three main subunits: a, b and c.

It localises to the cell inner membrane. Produces ATP from ADP in the presence of a proton gradient across the membrane. The gamma chain is believed to be important in regulating ATPase activity and the flow of protons through the CF(0) complex. The chain is ATP synthase gamma chain from Dinoroseobacter shibae (strain DSM 16493 / NCIMB 14021 / DFL 12).